We begin with the raw amino-acid sequence, 159 residues long: Endoribonuclease YbeY (159 aa).

Positions 125, 129, and 135 each coordinate Zn(2+).

Belongs to the endoribonuclease YbeY family. The cofactor is Zn(2+).

Its subcellular location is the cytoplasm. Single strand-specific metallo-endoribonuclease involved in late-stage 70S ribosome quality control and in maturation of the 3' terminus of the 16S rRNA. The sequence is that of Endoribonuclease YbeY from Brevibacillus brevis (strain 47 / JCM 6285 / NBRC 100599).